The following is a 194-amino-acid chain: NADH-quinone oxidoreductase subunit B 1 (194 aa).

A compositionally biased stretch (polar residues) spans 1-12 (MGVTPVSNQPLV). The tract at residues 1-23 (MGVTPVSNQPLVAQQPKGIIDPS) is disordered. Residues Cys73, Cys74, Cys138, and Cys168 each coordinate [4Fe-4S] cluster.

It belongs to the complex I 20 kDa subunit family. NDH-1 is composed of 14 different subunits. Subunits NuoB, C, D, E, F, and G constitute the peripheral sector of the complex. Requires [4Fe-4S] cluster as cofactor.

The protein resides in the cell inner membrane. The enzyme catalyses a quinone + NADH + 5 H(+)(in) = a quinol + NAD(+) + 4 H(+)(out). NDH-1 shuttles electrons from NADH, via FMN and iron-sulfur (Fe-S) centers, to quinones in the respiratory chain. The immediate electron acceptor for the enzyme in this species is believed to be ubiquinone. Couples the redox reaction to proton translocation (for every two electrons transferred, four hydrogen ions are translocated across the cytoplasmic membrane), and thus conserves the redox energy in a proton gradient. The polypeptide is NADH-quinone oxidoreductase subunit B 1 (Rhizobium etli (strain ATCC 51251 / DSM 11541 / JCM 21823 / NBRC 15573 / CFN 42)).